The sequence spans 178 residues: Gluconokinase (178 aa).

19 to 26 (GVSGTGKT) lines the ATP pocket.

Belongs to the gluconokinase GntK/GntV family. As to quaternary structure, monomer.

The enzyme catalyses D-gluconate + ATP = 6-phospho-D-gluconate + ADP + H(+). It functions in the pathway carbohydrate acid metabolism; D-gluconate degradation. With respect to regulation, activated by magnesium. Phosphorylates gluconate to 6-phosphogluconate. The sequence is that of Gluconokinase from Gluconobacter oxydans (strain 621H) (Gluconobacter suboxydans).